The following is a 38-amino-acid chain: uncharacterized protein (38 aa).

A helical membrane pass occupies residues 10-32 (FSLLWYFLVGGGKGEVCWRFLGI).

The protein localises to the membrane. This is an uncharacterized protein from Saccharomyces cerevisiae (strain ATCC 204508 / S288c) (Baker's yeast).